The following is a 352-amino-acid chain: Holliday junction branch migration complex subunit RuvB (352 aa).

The segment at 1 to 182 is large ATPase domain (RuvB-L); that stretch reads MRIELLNTPP…FGINSRFDYY (182 aa). ATP-binding positions include I21, R22, G63, K66, T67, T68, 129 to 131, R172, Y182, and R219; that span reads EDF. T67 serves as a coordination point for Mg(2+). Positions 183-253 are small ATPAse domain (RuvB-S); it reads EPELLTRIII…IAMKTLECLE (71 aa). Residues 256–352 are head domain (RuvB-H); sequence EEGLDEMDKK…LPLFDESEAD (97 aa). DNA-binding residues include R292, R311, and R316.

This sequence belongs to the RuvB family. In terms of assembly, homohexamer. Forms an RuvA(8)-RuvB(12)-Holliday junction (HJ) complex. HJ DNA is sandwiched between 2 RuvA tetramers; dsDNA enters through RuvA and exits via RuvB. An RuvB hexamer assembles on each DNA strand where it exits the tetramer. Each RuvB hexamer is contacted by two RuvA subunits (via domain III) on 2 adjacent RuvB subunits; this complex drives branch migration. In the full resolvosome a probable DNA-RuvA(4)-RuvB(12)-RuvC(2) complex forms which resolves the HJ.

The protein localises to the cytoplasm. It carries out the reaction ATP + H2O = ADP + phosphate + H(+). The RuvA-RuvB-RuvC complex processes Holliday junction (HJ) DNA during genetic recombination and DNA repair, while the RuvA-RuvB complex plays an important role in the rescue of blocked DNA replication forks via replication fork reversal (RFR). RuvA specifically binds to HJ cruciform DNA, conferring on it an open structure. The RuvB hexamer acts as an ATP-dependent pump, pulling dsDNA into and through the RuvAB complex. RuvB forms 2 homohexamers on either side of HJ DNA bound by 1 or 2 RuvA tetramers; 4 subunits per hexamer contact DNA at a time. Coordinated motions by a converter formed by DNA-disengaged RuvB subunits stimulates ATP hydrolysis and nucleotide exchange. Immobilization of the converter enables RuvB to convert the ATP-contained energy into a lever motion, pulling 2 nucleotides of DNA out of the RuvA tetramer per ATP hydrolyzed, thus driving DNA branch migration. The RuvB motors rotate together with the DNA substrate, which together with the progressing nucleotide cycle form the mechanistic basis for DNA recombination by continuous HJ branch migration. Branch migration allows RuvC to scan DNA until it finds its consensus sequence, where it cleaves and resolves cruciform DNA. This Chlorobium chlorochromatii (strain CaD3) protein is Holliday junction branch migration complex subunit RuvB.